The sequence spans 201 residues: Glycerol-3-phosphate acyltransferase (201 aa).

5 consecutive transmembrane segments (helical) span residues 9 to 29, 60 to 80, 86 to 106, 116 to 136, and 153 to 173; these read LTLIGALVFGYFLGSIPFGLI, LAAATLIFDMLKGTVAVLVAS, AAIGAGFGAFIGHLFPVWIGF, LGVLIGLAWPGALVFAAVWIV, and IVVPIALYSRGYPAIAVLFAI.

Belongs to the PlsY family. Probably interacts with PlsX.

Its subcellular location is the cell inner membrane. It catalyses the reaction an acyl phosphate + sn-glycerol 3-phosphate = a 1-acyl-sn-glycero-3-phosphate + phosphate. The protein operates within lipid metabolism; phospholipid metabolism. Functionally, catalyzes the transfer of an acyl group from acyl-phosphate (acyl-PO(4)) to glycerol-3-phosphate (G3P) to form lysophosphatidic acid (LPA). This enzyme utilizes acyl-phosphate as fatty acyl donor, but not acyl-CoA or acyl-ACP. The sequence is that of Glycerol-3-phosphate acyltransferase from Brucella anthropi (strain ATCC 49188 / DSM 6882 / CCUG 24695 / JCM 21032 / LMG 3331 / NBRC 15819 / NCTC 12168 / Alc 37) (Ochrobactrum anthropi).